Consider the following 174-residue polypeptide: MKIGPVGKHDARSTTIVNWDEGSHDGFISQIFLSHGVAGIMSIQFQFVMDGKLVLSDRHGPFSGNMFDVIELNYPHEYITGISGEYYKYEANNPHMRSLKFNTNTSEYGPFGTSGSSNDKFAFKLGKSPQFGGFHGTYDASGLQYIGVYLRPKTVLPKIDTGNAEETESKIVLG.

In terms of domain architecture, Jacalin-type lectin spans 1-152; sequence MKIGPVGKHD…LQYIGVYLRP (152 aa).

The protein belongs to the jacalin lectin family. In terms of assembly, self-interacts. Interacts with RTM3. Expressed at low levels exclusively in phloem-associated cells (e.g. sieve elements and adjacent cells).

The protein resides in the cytoplasm. Functionally, required for the restriction of long-distance movement of the pathogenic tobacco etch virus (TEV) without causing a hypersensitive response or inducing systemic acquired resistance. The sequence is that of Protein RESTRICTED TEV MOVEMENT 1 (RTM1) from Arabidopsis thaliana (Mouse-ear cress).